Here is a 186-residue protein sequence, read N- to C-terminus: Peptidyl-tRNA hydrolase (186 aa).

The active-site Proton acceptor is the histidine 19. Positions 64, 66, and 112 each coordinate tRNA.

The protein belongs to the PTH family. In terms of assembly, monomer.

The protein resides in the cytoplasm. The enzyme catalyses an N-acyl-L-alpha-aminoacyl-tRNA + H2O = an N-acyl-L-amino acid + a tRNA + H(+). Its function is as follows. Hydrolyzes ribosome-free peptidyl-tRNAs (with 1 or more amino acids incorporated), which drop off the ribosome during protein synthesis, or as a result of ribosome stalling. In terms of biological role, catalyzes the release of premature peptidyl moieties from peptidyl-tRNA molecules trapped in stalled 50S ribosomal subunits, and thus maintains levels of free tRNAs and 50S ribosomes. This is Peptidyl-tRNA hydrolase from Pelagibacter ubique (strain HTCC1062).